The chain runs to 432 residues: Adenylosuccinate synthetase (432 aa).

GTP is bound by residues 12–18 and 40–42; these read GDEGKGK and GHT. Asp13 acts as the Proton acceptor in catalysis. Mg(2+) contacts are provided by Asp13 and Gly40. IMP-binding positions include 13-16, 38-41, Thr132, Arg146, Gln226, Thr241, and Arg305; these read DEGK and NAGH. His41 (proton donor) is an active-site residue. Substrate is bound at residue 301 to 307; it reads VVTGRKR. GTP-binding positions include Arg307, 333–335, and 415–417; these read KLD and STS.

Belongs to the adenylosuccinate synthetase family. In terms of assembly, homodimer. The cofactor is Mg(2+).

Its subcellular location is the cytoplasm. It carries out the reaction IMP + L-aspartate + GTP = N(6)-(1,2-dicarboxyethyl)-AMP + GDP + phosphate + 2 H(+). The protein operates within purine metabolism; AMP biosynthesis via de novo pathway; AMP from IMP: step 1/2. Its function is as follows. Plays an important role in the de novo pathway of purine nucleotide biosynthesis. Catalyzes the first committed step in the biosynthesis of AMP from IMP. This chain is Adenylosuccinate synthetase, found in Rhizobium johnstonii (strain DSM 114642 / LMG 32736 / 3841) (Rhizobium leguminosarum bv. viciae).